Reading from the N-terminus, the 123-residue chain is NADH-quinone oxidoreductase subunit A (123 aa).

The next 3 membrane-spanning stretches (helical) occupy residues 11-31, 64-84, and 93-113; these read YLPIAIFFGIAVLVSGLIMIL, ICFYLVAILFIIFDLEIAFLV, and IGKIGFFSMMFFLFVLIIGFI.

Belongs to the complex I subunit 3 family. As to quaternary structure, NDH-1 is composed of 14 different subunits. Subunits NuoA, H, J, K, L, M, N constitute the membrane sector of the complex.

Its subcellular location is the cell inner membrane. The enzyme catalyses a quinone + NADH + 5 H(+)(in) = a quinol + NAD(+) + 4 H(+)(out). In terms of biological role, NDH-1 shuttles electrons from NADH, via FMN and iron-sulfur (Fe-S) centers, to quinones in the respiratory chain. The immediate electron acceptor for the enzyme in this species is believed to be ubiquinone. Couples the redox reaction to proton translocation (for every two electrons transferred, four hydrogen ions are translocated across the cytoplasmic membrane), and thus conserves the redox energy in a proton gradient. This is NADH-quinone oxidoreductase subunit A from Rickettsia conorii (strain ATCC VR-613 / Malish 7).